Reading from the N-terminus, the 94-residue chain is Small ubiquitin-related modifier 3-like (94 aa).

K11 is covalently cross-linked (Glycyl lysine isopeptide (Lys-Gly) (interchain with G-Cter in SUMO)). One can recognise a Ubiquitin-like domain in the interval 15–92 (DHINLKVAGQ…IDVFQQQTGG (78 aa)). G92 is covalently cross-linked (Glycyl lysine isopeptide (Gly-Lys) (interchain with K-? in acceptor proteins)). Residues 93-94 (SC) constitute a propeptide that is removed on maturation.

This sequence belongs to the ubiquitin family. SUMO subfamily. In terms of assembly, interacts with sae2 and ube2i. Covalently attached to a number of proteins. Post-translationally, polymeric chains can be formed through Lys-11 cross-linking. Cleavage of precursor form by a sentrin-specific protease is necessary for function.

The protein resides in the cytoplasm. It is found in the nucleus. Its subcellular location is the PML body. In terms of biological role, ubiquitin-like protein which can be covalently attached to target lysines either as a monomer or as a lysine-linked polymer. Does not seem to be involved in protein degradation and may function as an antagonist of ubiquitin in the degradation process. Plays a role in a number of cellular processes such as nuclear transport, DNA replication and repair, mitosis and signal transduction. Covalent attachment to its substrates requires prior activation by the E1 complex sae1-sae2 and linkage to the E2 enzyme ube2i. In Danio rerio (Zebrafish), this protein is Small ubiquitin-related modifier 3-like (sumo3l).